Reading from the N-terminus, the 540-residue chain is Glucose-6-phosphate isomerase (540 aa).

The active-site Proton donor is the Glu350. Residues His381 and Lys503 contribute to the active site.

The protein belongs to the GPI family.

It localises to the cytoplasm. It catalyses the reaction alpha-D-glucose 6-phosphate = beta-D-fructose 6-phosphate. Its pathway is carbohydrate biosynthesis; gluconeogenesis. It participates in carbohydrate degradation; glycolysis; D-glyceraldehyde 3-phosphate and glycerone phosphate from D-glucose: step 2/4. In terms of biological role, catalyzes the reversible isomerization of glucose-6-phosphate to fructose-6-phosphate. The protein is Glucose-6-phosphate isomerase of Burkholderia multivorans (strain ATCC 17616 / 249).